The following is a 458-amino-acid chain: tRNA modification GTPase MnmE (458 aa).

Residues Arg23, Glu87, and Arg126 each contribute to the (6S)-5-formyl-5,6,7,8-tetrahydrofolate site. Positions Gly224–Phe380 constitute a TrmE-type G domain. K(+) is bound at residue Asn234. GTP-binding positions include Asn234 to Ser239, Thr253 to Thr259, and Asp278 to Gly281. Ser238 contributes to the Mg(2+) binding site. 3 residues coordinate K(+): Thr253, Ile255, and Thr258. Thr259 is a binding site for Mg(2+). Lys458 contributes to the (6S)-5-formyl-5,6,7,8-tetrahydrofolate binding site.

Belongs to the TRAFAC class TrmE-Era-EngA-EngB-Septin-like GTPase superfamily. TrmE GTPase family. As to quaternary structure, homodimer. Heterotetramer of two MnmE and two MnmG subunits. K(+) serves as cofactor.

It localises to the cytoplasm. Exhibits a very high intrinsic GTPase hydrolysis rate. Involved in the addition of a carboxymethylaminomethyl (cmnm) group at the wobble position (U34) of certain tRNAs, forming tRNA-cmnm(5)s(2)U34. This Clostridium perfringens (strain ATCC 13124 / DSM 756 / JCM 1290 / NCIMB 6125 / NCTC 8237 / Type A) protein is tRNA modification GTPase MnmE.